The following is a 110-amino-acid chain: uncharacterized protein (110 aa).

This is an uncharacterized protein from Acidianus convivator (ABV).